The following is a 65-amino-acid chain: Hirudin-3A' (65 aa).

The segment at 1-3 (VVY) is interaction with thrombin active site. 3 cysteine pairs are disulfide-bonded: Cys-6–Cys-14, Cys-16–Cys-28, and Cys-22–Cys-39. The interval 32–65 (SDGEKNECVTGEGTPKPQSHNDGDFEEIPEEYLQ) is disordered. O-linked (GalNAc...) threonine glycosylation is present at Thr-45. The segment at 55 to 65 (DFEEIPEEYLQ) is interaction with fibrinogen-binding exosite of thrombin. Residues 55–65 (DFEEIPEEYLQ) are compositionally biased toward acidic residues. Position 63 is a sulfotyrosine (Tyr-63).

It belongs to the protease inhibitor I14 (hirudin) family.

The protein localises to the secreted. Its function is as follows. Hirudin is a potent thrombin-specific protease inhibitor. It forms a stable non-covalent complex with alpha-thrombin, thereby abolishing its ability to cleave fibrinogen. The chain is Hirudin-3A' from Hirudo medicinalis (Medicinal leech).